Consider the following 321-residue polypeptide: Transcriptional activator protein Pur-alpha (321 aa).

The segment at Met-1–Gln-54 is disordered. Ala-2 is modified (N-acetylalanine). Positions Glu-9–Gly-51 are enriched in gly residues. At Ser-181 the chain carries Phosphoserine. Over residues Leu-294–Gln-313 the composition is skewed to low complexity. The tract at residues Leu-294–Asp-321 is disordered.

This sequence belongs to the PUR DNA-binding protein family. As to quaternary structure, homodimer, heterodimer with PURB and heterotrimer with PURB and YBX1/Y-box protein 1. Interacts with FMR1; this interaction occurs in association with polyribosome.

It localises to the nucleus. This is a probable transcription activator that specifically binds the purine-rich single strand of the PUR element located upstream of the c-Myc gene. May play a role in the initiation of DNA replication and in recombination. In Mus musculus (Mouse), this protein is Transcriptional activator protein Pur-alpha (Pura).